The sequence spans 693 residues: Glycine--tRNA ligase beta subunit (693 aa).

Belongs to the class-II aminoacyl-tRNA synthetase family. As to quaternary structure, tetramer of two alpha and two beta subunits.

It is found in the cytoplasm. The enzyme catalyses tRNA(Gly) + glycine + ATP = glycyl-tRNA(Gly) + AMP + diphosphate. The sequence is that of Glycine--tRNA ligase beta subunit from Ligilactobacillus salivarius (strain UCC118) (Lactobacillus salivarius).